The chain runs to 83 residues: Mu-theraphotoxin-Hhn2o (83 aa).

An N-terminal signal peptide occupies residues 1-21 (MKASMFLALAGLVLLFVVGYA). The propeptide occupies 22 to 48 (SESEEKEFPIELLSKIFAVDVFKGEER). Disulfide bonds link Cys-50-Cys-65, Cys-57-Cys-70, and Cys-64-Cys-77. Leu-81 carries the post-translational modification Leucine amide.

The protein belongs to the neurotoxin 10 (Hwtx-1) family. 15 (Hntx-3) subfamily. Monomer. In terms of tissue distribution, expressed by the venom gland.

Its subcellular location is the secreted. Its function is as follows. Lethal neurotoxin. Selectively blocks tetrodotoxin-sensitive voltage-gated sodium channels (Nav). Does not affect tetrodotoxin-resistant voltage-gated sodium channels or calcium channels. The protein is Mu-theraphotoxin-Hhn2o of Cyriopagopus hainanus (Chinese bird spider).